Reading from the N-terminus, the 1045-residue chain is Extracellular serine protease (1045 aa).

The first 27 residues, 1 to 27 (MILNKRLKLAYCVFLGCYGLSIHSSLA), serve as a signal peptide directing secretion. The 349-residue stretch at 49–397 (QWGLEAISAE…WGRVNLRDAI (349 aa)) folds into the Peptidase S8 domain. Catalysis depends on charge relay system residues Asp76, His112, and Ser341. A propeptide spans 646-1045 (SLASTENEKA…SVNAGLTWRF (400 aa)) (translocator domain; removed in mature form). The Autotransporter domain occupies 769–1045 (IKADDNGAWA…SVNAGLTWRF (277 aa)).

This sequence belongs to the peptidase S8 family.

Its subcellular location is the secreted. The polypeptide is Extracellular serine protease (Serratia marcescens).